Consider the following 381-residue polypeptide: N-acetyldiaminopimelate deacetylase (381 aa).

D73 is an active-site residue. E132 serves as the catalytic Proton acceptor.

The protein belongs to the peptidase M20A family. N-acetyldiaminopimelate deacetylase subfamily.

The enzyme catalyses N-acetyl-(2S,6S)-2,6-diaminopimelate + H2O = (2S,6S)-2,6-diaminopimelate + acetate. It functions in the pathway amino-acid biosynthesis; L-lysine biosynthesis via DAP pathway; LL-2,6-diaminopimelate from (S)-tetrahydrodipicolinate (acetylase route): step 3/3. Catalyzes the conversion of N-acetyl-diaminopimelate to diaminopimelate and acetate. This Limosilactobacillus reuteri (strain DSM 20016) (Lactobacillus reuteri) protein is N-acetyldiaminopimelate deacetylase.